We begin with the raw amino-acid sequence, 331 residues long: MTQNLGISVPIMSPSPMFANAPPEKKGVKNFAIDFLMGGVSAAVSKTAAAPIERVKLLIQNQDEMIKAGRLSEPYKGIGDCFGRTIKDEGFGSLWRGNTANVIRYFPTQALNFAFKDYFKRMFNFKKDKDGYWKWFGGNLASGGAAGASSLFFVYSLDYARTRLANDAKASKGGGERQFNGLVDVYRKTLKSDGIAGLYRGFNISCVGIIVYRGLYFGLYDSLKPVLLTGTLQVCFFASFALGWLITNGAGLASYPIDTVRRRMMMTSGEAVKYKSSLDAFQQILKKEGAKSLFKGAGANILRAIAGAGVLSGYDQLQILFFGKKYGSGGA.

Solcar repeat units follow at residues 29 to 122, 134 to 226, and 238 to 320; these read KNFA…FKRM, KWFG…LKPV, and ASFA…LQIL. 5 consecutive transmembrane segments (helical) span residues 31–58, 99–123, 132–152, 202–223, and 237–257; these read FAID…VKLL, TANV…KRMF, YWKW…SSLF, FNIS…YDSL, and FASF…SYPI. Residues Arg-104 and Lys-116 each coordinate ADP. An ADP-binding site is contributed by Arg-261. Residues 261–266 are important for transport activity; it reads RRRMMM. The Nucleotide carrier signature motif signature appears at 261–266; that stretch reads RRRMMM. A helical transmembrane segment spans residues 297 to 317; that stretch reads AGANILRAIAGAGVLSGYDQL.

This sequence belongs to the mitochondrial carrier (TC 2.A.29) family. As to quaternary structure, monomer.

Its subcellular location is the mitochondrion inner membrane. The enzyme catalyses ADP(in) + ATP(out) = ADP(out) + ATP(in). With respect to regulation, the matrix-open state (m-state) is inhibited by the membrane-permeable bongkrekic acid (BKA). The cytoplasmic-open state (c-state) is inhibited by the membrane-impermeable toxic inhibitor carboxyatractyloside (CATR). Functionally, ADP:ATP antiporter that mediates import of ADP into the mitochondrial matrix for ATP synthesis, and export of ATP out to fuel the cell. Cycles between the cytoplasmic-open state (c-state) and the matrix-open state (m-state): operates by the alternating access mechanism with a single substrate-binding site intermittently exposed to either the cytosolic (c-state) or matrix (m-state) side of the inner mitochondrial membrane. The polypeptide is ADP,ATP carrier protein 1, mitochondrial (ANT-G1) (Triticum aestivum (Wheat)).